A 236-amino-acid polypeptide reads, in one-letter code: Ubiquinone biosynthesis O-methyltransferase (236 aa).

4 residues coordinate S-adenosyl-L-methionine: arginine 36, glycine 56, aspartate 77, and methionine 125.

The protein belongs to the methyltransferase superfamily. UbiG/COQ3 family.

The catalysed reaction is a 3-demethylubiquinol + S-adenosyl-L-methionine = a ubiquinol + S-adenosyl-L-homocysteine + H(+). It catalyses the reaction a 3-(all-trans-polyprenyl)benzene-1,2-diol + S-adenosyl-L-methionine = a 2-methoxy-6-(all-trans-polyprenyl)phenol + S-adenosyl-L-homocysteine + H(+). It functions in the pathway cofactor biosynthesis; ubiquinone biosynthesis. Functionally, O-methyltransferase that catalyzes the 2 O-methylation steps in the ubiquinone biosynthetic pathway. The polypeptide is Ubiquinone biosynthesis O-methyltransferase (Glaesserella parasuis serovar 5 (strain SH0165) (Haemophilus parasuis)).